A 194-amino-acid polypeptide reads, in one-letter code: Endoribonuclease YbeY (194 aa).

Zn(2+) is bound by residues His127, His131, and Asp137. A disordered region spans residues 162 to 194 (PLSNDEDSAPEQDDSFDDDASDSSGGIMSGGVS). Acidic residues predominate over residues 165–182 (NDEDSAPEQDDSFDDDAS).

This sequence belongs to the endoribonuclease YbeY family. The cofactor is Zn(2+).

It localises to the cytoplasm. Functionally, single strand-specific metallo-endoribonuclease involved in late-stage 70S ribosome quality control and in maturation of the 3' terminus of the 16S rRNA. This chain is Endoribonuclease YbeY, found in Rhodopirellula baltica (strain DSM 10527 / NCIMB 13988 / SH1).